The sequence spans 201 residues: Mediator of RNA polymerase II transcription subunit 22 (201 aa).

Residues Ser-93–Val-123 are a coiled coil. The interval Leu-166–Ala-201 is disordered.

In terms of assembly, component of the Mediator complex, which is composed of MED1, MED4, MED6, MED7, MED8, MED9, MED10, MED11, MED12, MED13, MED13L, MED14, MED15, MED16, MED17, MED18, MED19, MED20, MED21, MED22, MED23, MED24, MED25, MED26, MED27, MED29, MED30, MED31, CCNC, CDK8 and CDC2L6/CDK11. The MED12, MED13, CCNC and CDK8 subunits form a distinct module termed the CDK8 module. Mediator containing the CDK8 module is less active than Mediator lacking this module in supporting transcriptional activation. Individual preparations of the Mediator complex lacking one or more distinct subunits have been variously termed ARC, CRSP, DRIP, PC2, SMCC and TRAP.

The protein localises to the nucleus. Its function is as follows. Component of the Mediator complex, a coactivator involved in the regulated transcription of nearly all RNA polymerase II-dependent genes. Mediator functions as a bridge to convey information from gene-specific regulatory proteins to the basal RNA polymerase II transcription machinery. Mediator is recruited to promoters by direct interactions with regulatory proteins and serves as a scaffold for the assembly of a functional preinitiation complex with RNA polymerase II and the general transcription factors. The chain is Mediator of RNA polymerase II transcription subunit 22 (MED22) from Bos taurus (Bovine).